The primary structure comprises 357 residues: Mitochondrial carrier protein LEU5 (357 aa).

6 consecutive transmembrane segments (helical) span residues 31–47 (DYIV…GSCA), 103–119 (LRIF…YEQI), 136–153 (LVSG…TYPL), 208–228 (VPTV…HDLL), 269–285 (ISGG…AYPF), and 325–347 (GFFV…SFFV). Solcar repeat units lie at residues 31 to 122 (DYIV…IRNT), 130 to 231 (ESHW…LHDV), and 262 to 354 (LRTW…MKWN).

The protein belongs to the mitochondrial carrier (TC 2.A.29) family.

It localises to the mitochondrion inner membrane. Functionally, required for the accumulation of coenzyme A in the mitochondrial matrix. This Saccharomyces cerevisiae (strain ATCC 204508 / S288c) (Baker's yeast) protein is Mitochondrial carrier protein LEU5 (LEU5).